The chain runs to 305 residues: Ribonuclease BN (305 aa).

Zn(2+)-binding residues include histidine 64, histidine 66, aspartate 68, histidine 69, histidine 141, aspartate 212, and histidine 270. The Proton acceptor role is filled by aspartate 68.

Belongs to the RNase Z family. RNase BN subfamily. As to quaternary structure, homodimer. Requires Zn(2+) as cofactor.

Zinc phosphodiesterase, which has both exoribonuclease and endoribonuclease activities. The protein is Ribonuclease BN of Escherichia coli O45:K1 (strain S88 / ExPEC).